Reading from the N-terminus, the 474-residue chain is tRNA-2-methylthio-N(6)-dimethylallyladenosine synthase (474 aa).

In terms of domain architecture, MTTase N-terminal spans 3–120; it reads KKLHIKTWGC…LPEMINAVRG (118 aa). C12, C49, C83, C157, C161, and C164 together coordinate [4Fe-4S] cluster. Residues 143–375 form the Radical SAM core domain; the sequence is RADGPTAFVS…QERINQQAMA (233 aa). The TRAM domain occupies 378-441; the sequence is RRMLGTVQRI…TNSLRGKIVR (64 aa).

This sequence belongs to the methylthiotransferase family. MiaB subfamily. Monomer. Requires [4Fe-4S] cluster as cofactor.

The protein localises to the cytoplasm. It catalyses the reaction N(6)-dimethylallyladenosine(37) in tRNA + (sulfur carrier)-SH + AH2 + 2 S-adenosyl-L-methionine = 2-methylsulfanyl-N(6)-dimethylallyladenosine(37) in tRNA + (sulfur carrier)-H + 5'-deoxyadenosine + L-methionine + A + S-adenosyl-L-homocysteine + 2 H(+). In terms of biological role, catalyzes the methylthiolation of N6-(dimethylallyl)adenosine (i(6)A), leading to the formation of 2-methylthio-N6-(dimethylallyl)adenosine (ms(2)i(6)A) at position 37 in tRNAs that read codons beginning with uridine. In Klebsiella pneumoniae (strain 342), this protein is tRNA-2-methylthio-N(6)-dimethylallyladenosine synthase.